The chain runs to 454 residues: Bifunctional protein GlmU (454 aa).

Residues 1–228 (MNKCAIILAA…FEETLGVNSR (228 aa)) are pyrophosphorylase. UDP-N-acetyl-alpha-D-glucosamine contacts are provided by residues 8 to 11 (LAAG), Lys22, Gln73, and 78 to 79 (GT). Position 103 (Asp103) interacts with Mg(2+). UDP-N-acetyl-alpha-D-glucosamine-binding residues include Gly140, Glu154, Asn169, and Asn226. Asn226 lines the Mg(2+) pocket. A linker region spans residues 229-249 (AELAKVESIMRNRINRTHLDN). The N-acetyltransferase stretch occupies residues 250–454 (GVTIIDPLNT…EGWVERKKLK (205 aa)). The UDP-N-acetyl-alpha-D-glucosamine site is built by Arg331 and Lys349. His361 acts as the Proton acceptor in catalysis. UDP-N-acetyl-alpha-D-glucosamine-binding residues include Tyr364 and Asn375. Acetyl-CoA is bound by residues 384-385 (NY), Ala421, and Arg438.

In the N-terminal section; belongs to the N-acetylglucosamine-1-phosphate uridyltransferase family. This sequence in the C-terminal section; belongs to the transferase hexapeptide repeat family. Homotrimer. Mg(2+) is required as a cofactor.

The protein resides in the cytoplasm. It catalyses the reaction alpha-D-glucosamine 1-phosphate + acetyl-CoA = N-acetyl-alpha-D-glucosamine 1-phosphate + CoA + H(+). The catalysed reaction is N-acetyl-alpha-D-glucosamine 1-phosphate + UTP + H(+) = UDP-N-acetyl-alpha-D-glucosamine + diphosphate. The protein operates within nucleotide-sugar biosynthesis; UDP-N-acetyl-alpha-D-glucosamine biosynthesis; N-acetyl-alpha-D-glucosamine 1-phosphate from alpha-D-glucosamine 6-phosphate (route II): step 2/2. It functions in the pathway nucleotide-sugar biosynthesis; UDP-N-acetyl-alpha-D-glucosamine biosynthesis; UDP-N-acetyl-alpha-D-glucosamine from N-acetyl-alpha-D-glucosamine 1-phosphate: step 1/1. It participates in bacterial outer membrane biogenesis; LPS lipid A biosynthesis. Catalyzes the last two sequential reactions in the de novo biosynthetic pathway for UDP-N-acetylglucosamine (UDP-GlcNAc). The C-terminal domain catalyzes the transfer of acetyl group from acetyl coenzyme A to glucosamine-1-phosphate (GlcN-1-P) to produce N-acetylglucosamine-1-phosphate (GlcNAc-1-P), which is converted into UDP-GlcNAc by the transfer of uridine 5-monophosphate (from uridine 5-triphosphate), a reaction catalyzed by the N-terminal domain. The polypeptide is Bifunctional protein GlmU (Clostridium perfringens (strain ATCC 13124 / DSM 756 / JCM 1290 / NCIMB 6125 / NCTC 8237 / Type A)).